Consider the following 241-residue polypeptide: Phosphoribosylaminoimidazole-succinocarboxamide synthase (241 aa).

Belongs to the SAICAR synthetase family.

It catalyses the reaction 5-amino-1-(5-phospho-D-ribosyl)imidazole-4-carboxylate + L-aspartate + ATP = (2S)-2-[5-amino-1-(5-phospho-beta-D-ribosyl)imidazole-4-carboxamido]succinate + ADP + phosphate + 2 H(+). It participates in purine metabolism; IMP biosynthesis via de novo pathway; 5-amino-1-(5-phospho-D-ribosyl)imidazole-4-carboxamide from 5-amino-1-(5-phospho-D-ribosyl)imidazole-4-carboxylate: step 1/2. This chain is Phosphoribosylaminoimidazole-succinocarboxamide synthase (purC), found in Bacillus subtilis (strain 168).